The chain runs to 341 residues: NADH-quinone oxidoreductase subunit H 2 (341 aa).

The next 8 helical transmembrane spans lie at 13 to 33 (IIVI…IAYI), 82 to 102 (GVFL…WAVI), 115 to 135 (VGVL…IMAG), 161 to 181 (IGFV…TAIV), 190 to 210 (MLGW…VSAL), 248 to 268 (YVAI…GWLP), 277 to 297 (WVPG…LFAM), and 317 to 337 (VFLP…QFAG).

Belongs to the complex I subunit 1 family. NDH-1 is composed of 14 different subunits. Subunits NuoA, H, J, K, L, M, N constitute the membrane sector of the complex.

The protein resides in the cell inner membrane. The catalysed reaction is a quinone + NADH + 5 H(+)(in) = a quinol + NAD(+) + 4 H(+)(out). Its function is as follows. NDH-1 shuttles electrons from NADH, via FMN and iron-sulfur (Fe-S) centers, to quinones in the respiratory chain. The immediate electron acceptor for the enzyme in this species is believed to be ubiquinone. Couples the redox reaction to proton translocation (for every two electrons transferred, four hydrogen ions are translocated across the cytoplasmic membrane), and thus conserves the redox energy in a proton gradient. This subunit may bind ubiquinone. This is NADH-quinone oxidoreductase subunit H 2 from Rhodopseudomonas palustris (strain BisB5).